Consider the following 569-residue polypeptide: Hemin/hemoglobin-binding protein 2 (569 aa).

An N-terminal signal peptide occupies residues 1-28 (MKKLWKKGLVAFLALTLIFQLIPGFASA). NEAT domains are found at residues 34–173 (KDGG…FKVI), 184–307 (LSDG…ATAA), and 360–484 (LNNH…IKDI). Residues 204-205 (SS), Tyr280, and Tyr289 contribute to the heme site. The tract at residues 307–357 (ASSYPGSDETPPVVNPGETNPPVTKPDPGTTNPPVTTPPTTPSKPAVVDPK) is disordered. A compositionally biased stretch (polar residues) spans 502 to 511 (TGNVASNNNA). The disordered stretch occupies residues 502–537 (TGNVASNNNAGPKLAKPDFDDTNSVQKTASKTEKNA). An NXZTN sorting signal motif is present at residues 536–540 (NAKTN). Pentaglycyl murein peptidoglycan amidated threonine is present on Thr539. Positions 540–569 (NDSSSMVWYITLFGASFLYLAYRLKRKRLS) are cleaved as a propeptide — removed by sortase B.

The protein resides in the cell surface. It localises to the secreted. The protein localises to the cell wall. Its activity is regulated as follows. Is overexpressed in mecA, clpC and clpP mutants, suggesting the protein level is controlled by MecA, ClpC and ClpP (at protein level). Its function is as follows. Acts as an extracellular and cell wall-bound hemophore; scavenges host heme and hemoglobin from the environment and also serves as a cell wall receptor for both. At low hemin (Hn) and hemoglobin (Hb) concentrations adsorbs Hn/Hb and presumably directs it to membrane transporters. Soluble Hbp2 can probably pass Hn/Hb to cell wall-anchored Hbp2, and both forms can accept Hn/Hb from Hbp1. May be involved in crossing the digestive barrier in infected animals. Binds host hemin. Binds host hemoglobin with affinity in the nanomolar range. This chain is Hemin/hemoglobin-binding protein 2, found in Listeria monocytogenes serovar 1/2a (strain ATCC BAA-679 / EGD-e).